Consider the following 229-residue polypeptide: Protein fmp52-2, mitochondrial (229 aa).

Residues 1-44 constitute a mitochondrion transit peptide; the sequence is MTAAAVFGCTGAVGSQILATLLASDAFSSVATVSRKLPTAESPK.

The protein belongs to the FMP52 family.

The protein localises to the mitochondrion outer membrane. The chain is Protein fmp52-2, mitochondrial (fmp522) from Aspergillus terreus (strain NIH 2624 / FGSC A1156).